A 76-amino-acid chain; its full sequence is MAKIIRIKGEILGKDEPMVFTKEYNVVKEDDALETMYSEMGSKHAVKRAYIKIVEVSEISEEDVQNPILKKTLEMY.

Belongs to the eukaryotic ribosomal protein eL20 family. As to quaternary structure, part of the 50S ribosomal subunit. Binds 23S rRNA.

The sequence is that of Large ribosomal subunit protein eL20 from Methanococcus maripaludis (strain C7 / ATCC BAA-1331).